The sequence spans 319 residues: Aliphatic sulfonates import ATP-binding protein SsuB 1 (319 aa).

The 220-residue stretch at 63–282 (VTLSGVSKRF…ARASAAFAAL (220 aa)) folds into the ABC transporter domain. Residue 95–102 (GRSGCGKS) participates in ATP binding.

This sequence belongs to the ABC transporter superfamily. Aliphatic sulfonates importer (TC 3.A.1.17.2) family. As to quaternary structure, the complex is composed of two ATP-binding proteins (SsuB), two transmembrane proteins (SsuC) and a solute-binding protein (SsuA).

It is found in the cell inner membrane. It carries out the reaction ATP + H2O + aliphatic sulfonate-[sulfonate-binding protein]Side 1 = ADP + phosphate + aliphatic sulfonateSide 2 + [sulfonate-binding protein]Side 1.. Its function is as follows. Part of the ABC transporter complex SsuABC involved in aliphatic sulfonates import. Responsible for energy coupling to the transport system. The sequence is that of Aliphatic sulfonates import ATP-binding protein SsuB 1 from Burkholderia lata (strain ATCC 17760 / DSM 23089 / LMG 22485 / NCIMB 9086 / R18194 / 383).